We begin with the raw amino-acid sequence, 274 residues long: GCN5-related N-acetyltransferase 7, chloroplastic (274 aa).

A chloroplast-targeting transit peptide spans 1-65 (MAFLCSSLPS…STFVISESVS (65 aa)). The N-acetyltransferase domain occupies 75-267 (LRVRTFNELN…QRLLLWLALP (193 aa)). Acetyl-CoA contacts are provided by residues 189-191 (VCV), 197-202 (RNGVGY), 228-230 (NEA), and tyrosine 235. Tyrosine 235 acts as the Proton donor in catalysis.

The protein belongs to the acetyltransferase family. GNAT subfamily. Oligomer. In terms of processing, autoacetylated. As to expression, expressed in green tissues.

The protein localises to the plastid. The protein resides in the chloroplast. It catalyses the reaction an N-terminal L-alpha-aminoacyl-[protein] + acetyl-CoA = N-terminal N(alpha)-acetyl-L-alpha-aminoacyl-[protein] + CoA + H(+). The catalysed reaction is L-lysyl-[protein] + acetyl-CoA = N(6)-acetyl-L-lysyl-[protein] + CoA + H(+). It carries out the reaction N-terminal L-alanyl-[protein] + acetyl-CoA = N-terminal N(alpha)-acetyl-L-alanyl-[protein] + CoA + H(+). The enzyme catalyses N-terminal L-seryl-[protein] + acetyl-CoA = N-terminal N(alpha)-acetyl-L-seryl-[protein] + CoA + H(+). It catalyses the reaction N-terminal L-threonyl-[protein] + acetyl-CoA = N-terminal N(alpha)-acetyl-L-threonyl-[protein] + CoA + H(+). The catalysed reaction is N-terminal L-methionyl-[protein] + acetyl-CoA = N-terminal N(alpha)-acetyl-L-methionyl-[protein] + CoA + H(+). It carries out the reaction N-terminal L-prolyl-[protein] + acetyl-CoA = N-terminal N(alpha)-acetyl-L-prolyl-[protein] + CoA + H(+). The enzyme catalyses N-terminal L-valyl-[protein] + acetyl-CoA = N-terminal N(alpha)-acetyl-L-valyl-[protein] + CoA + H(+). Functionally, protein acetyltransferase with dual specificity triggering both N-alpha-acetylation (NTA), with a large spectrum of modified N-termini, including methionine, alanine, serine, threonine and to a lower extent valine and proline as substrates, and epsilon-lysine acetylation (KA). This Arabidopsis thaliana (Mouse-ear cress) protein is GCN5-related N-acetyltransferase 7, chloroplastic.